Consider the following 247-residue polypeptide: Proteasome subunit alpha type-7-1 (247 aa).

This sequence belongs to the peptidase T1A family. As to quaternary structure, the 26S proteasome consists of a 20S proteasome core and two 19S regulatory subunits. The 20S proteasome core is composed of 28 subunits that are arranged in four stacked rings, resulting in a barrel-shaped structure. The two end rings are each formed by seven alpha subunits, and the two central rings are each formed by seven beta subunits. The catalytic chamber with the active sites is on the inside of the barrel.

The protein resides in the cytoplasm. It is found in the nucleus. Functionally, the proteasome is a multicatalytic proteinase complex which is characterized by its ability to cleave peptides with Arg, Phe, Tyr, Leu, and Glu adjacent to the leaving group at neutral or slightly basic pH. The proteasome has an ATP-dependent proteolytic activity. In Drosophila virilis (Fruit fly), this protein is Proteasome subunit alpha type-7-1 (Pros28.1).